The following is a 729-amino-acid chain: Neurochondrin (729 aa).

The residue at position 2 (Ser2) is an N-acetylserine. The residue at position 2 (Ser2) is a Phosphoserine. 2 S-palmitoyl cysteine lipidation sites follow: Cys3 and Cys4. The residue at position 75 (Arg75) is an Asymmetric dimethylarginine. Ser448 is subject to Phosphoserine.

This sequence belongs to the neurochondrin family. Interacts with MCHR1. Interacts with SEMA4C. Interacts with DIAPH1 (via FH3 domain). Interacts with GRM5. Post-translationally, palmitoylated. Palmitoylation by ZDHHC1, ZDHHC3 and ZDHHC11 regulates the association of NCDN with endosome membranes. May also be palmitoylated by ZDHHC7. Expressed in brain and in peripheral nervous system (at protein level). Weakly expressed in neurites.

The protein resides in the cytoplasm. Its subcellular location is the cytosol. It is found in the endosome membrane. The protein localises to the cell projection. It localises to the dendrite. The protein resides in the postsynapse. Probably involved in signal transduction, in the nervous system, via increasing cell surface localization of GRM5 and positively regulating its signaling. Required for the spatial learning process. Acts as a negative regulator of Ca(2+)-calmodulin-dependent protein kinase 2 (CaMK2) phosphorylation. May play a role in modulating melanin-concentrating hormone-mediated functions via its interaction with MCHR1 that interferes with G protein-coupled signal transduction. May be involved in bone metabolism. May also be involved in neurite outgrowth. The chain is Neurochondrin (Ncdn) from Rattus norvegicus (Rat).